Consider the following 433-residue polypeptide: 3-phosphoshikimate 1-carboxyvinyltransferase (433 aa).

The 3-phosphoshikimate site is built by Lys-21, Ser-22, and Arg-26. Lys-21 serves as a coordination point for phosphoenolpyruvate. Phosphoenolpyruvate-binding residues include Gly-92 and Arg-120. The 3-phosphoshikimate site is built by Ser-166, Gln-168, Asp-317, and Lys-344. Gln-168 serves as a coordination point for phosphoenolpyruvate. Residue Asp-317 is the Proton acceptor of the active site. Phosphoenolpyruvate-binding residues include Arg-348 and Arg-391.

Belongs to the EPSP synthase family. In terms of assembly, monomer.

It is found in the cytoplasm. The enzyme catalyses 3-phosphoshikimate + phosphoenolpyruvate = 5-O-(1-carboxyvinyl)-3-phosphoshikimate + phosphate. Its pathway is metabolic intermediate biosynthesis; chorismate biosynthesis; chorismate from D-erythrose 4-phosphate and phosphoenolpyruvate: step 6/7. Functionally, catalyzes the transfer of the enolpyruvyl moiety of phosphoenolpyruvate (PEP) to the 5-hydroxyl of shikimate-3-phosphate (S3P) to produce enolpyruvyl shikimate-3-phosphate and inorganic phosphate. The chain is 3-phosphoshikimate 1-carboxyvinyltransferase from Caldicellulosiruptor saccharolyticus (strain ATCC 43494 / DSM 8903 / Tp8T 6331).